We begin with the raw amino-acid sequence, 317 residues long: Pantothenate kinase (317 aa).

G95–S102 contacts ATP.

This sequence belongs to the prokaryotic pantothenate kinase family.

The protein resides in the cytoplasm. It carries out the reaction (R)-pantothenate + ATP = (R)-4'-phosphopantothenate + ADP + H(+). It functions in the pathway cofactor biosynthesis; coenzyme A biosynthesis; CoA from (R)-pantothenate: step 1/5. The polypeptide is Pantothenate kinase (Rhodopseudomonas palustris (strain BisB18)).